Consider the following 514-residue polypeptide: MQQLNPAEISNLIKQRIQDLDAGATAKNEGTIVKVSDGIVQIHGLEDAMYGEMIEFEGEVYGMALNLERDSVGAVVLGDFLKLQEGQKAYCTGRILEVPVGPELLGRVVDALGNPIDGKGPINAKMTDKVEKIAPGVIDRQSVDQPVMTGYKSVDTMIPIGRGQRELIIGDRQTGKTAMAIDAIIAQKSSGIKCVYVAIGQKRSTIANVVRKLEQTGALEYTTVVVASASEPAALQYIAPYSGCTMGEYFRDRGEDALIVFDDLSKQAVAYRQISLLLRRPPGREAYPGDVFYLHSRLLERASRVNAAYVEKFTNGEVVGKTGSLTALPIIETQAGDVSAFVPTNVISITDGQIFLESSLFNSGIRPAVNAGISVSRVGGAAQTKIIKKLSGGIRTALAQYRELAAFAQFASDLDDVTREQLDHGERVTELMKQKQYQPMSISEQAAVIYASNEGFLADVPVEKIGSFEEAYLRYMHDEQADLMKEIDDTANYNDDIAGRLKSSLETFKQNHSY.

Residue 170-177 (GDRQTGKT) participates in ATP binding.

The protein belongs to the ATPase alpha/beta chains family. F-type ATPases have 2 components, CF(1) - the catalytic core - and CF(0) - the membrane proton channel. CF(1) has five subunits: alpha(3), beta(3), gamma(1), delta(1), epsilon(1). CF(0) has three main subunits: a(1), b(2) and c(9-12). The alpha and beta chains form an alternating ring which encloses part of the gamma chain. CF(1) is attached to CF(0) by a central stalk formed by the gamma and epsilon chains, while a peripheral stalk is formed by the delta and b chains.

The protein resides in the cell inner membrane. The enzyme catalyses ATP + H2O + 4 H(+)(in) = ADP + phosphate + 5 H(+)(out). Produces ATP from ADP in the presence of a proton gradient across the membrane. The alpha chain is a regulatory subunit. This Psychrobacter cryohalolentis (strain ATCC BAA-1226 / DSM 17306 / VKM B-2378 / K5) protein is ATP synthase subunit alpha.